A 1139-amino-acid chain; its full sequence is Dual 3',5'-cyclic-AMP and -GMP phosphodiesterase beta (1139 aa).

Disordered regions lie at residues 1 to 42 (MGKV…NINK) and 154 to 177 (GISE…STSN). The Cytoplasmic segment spans residues 1 to 429 (MGKVEDFEEH…LNLNNWISSR (429 aa)). The segment covering 9-22 (EHNKNSNQDIEKNV) has biased composition (basic and acidic residues). The segment covering 29-42 (NSNTINDQNENINK) has biased composition (polar residues). A helical transmembrane segment spans residues 430–450 (MIIIGIVMLILSFIIWPLTTW). The Extracellular segment spans residues 451 to 462 (SLKTSTWGRETY). Residues 463 to 483 (IIILFHTLMAINTLILIFFII) form a helical membrane-spanning segment. The Cytoplasmic segment spans residues 484–498 (IGSTELCKYSECMSY). The helical transmembrane segment at 499 to 519 (VLFSLMVALWGLWNIAIGLTL) threads the bilayer. Residues 520 to 536 (EYNPNLSEMPTTTYELE) lie on the Extracellular side of the membrane. Asparagine 524 carries an N-linked (GlcNAc...) asparagine glycan. Residues 537 to 557 (MIYVLTYIYGFLPLVIIDIFF) form a helical membrane-spanning segment. Residues 558-564 (PSRTKYN) lie on the Cytoplasmic side of the membrane. A helical membrane pass occupies residues 565 to 585 (WIIHLIFIFLNSSSIILVGSA). The Extracellular segment spans residues 586–592 (KPDFVPE). The helical transmembrane segment at 593-613 (IYVVFRILAYTTLCIFLYIGS) threads the bilayer. At 614-1139 (YTSELQIRYV…TLFFIKNVSD (526 aa)) the chain is on the cytoplasmic side. One can recognise a PDEase domain in the interval 775–1098 (INISQLTKMI…IMWDTLMKEE (324 aa)). Histidine 847 acts as the Proton donor in catalysis. 847–851 (HNTIH) is an a nucleoside 3',5'-cyclic phosphate binding site. The a divalent metal cation site is built by histidine 851, histidine 887, aspartate 888, and aspartate 1000. A nucleoside 3',5'-cyclic phosphate-binding residues include aspartate 888, aspartate 1000, and glutamine 1052.

It belongs to the cyclic nucleotide phosphodiesterase family. Requires a divalent metal cation as cofactor.

The protein resides in the cell membrane. It localises to the endoplasmic reticulum membrane. It catalyses the reaction 3',5'-cyclic GMP + H2O = GMP + H(+). The enzyme catalyses 3',5'-cyclic AMP + H2O = AMP + H(+). It participates in purine metabolism; 3',5'-cyclic GMP degradation; GMP from 3',5'-cyclic GMP: step 1/1. Its pathway is purine metabolism; 3',5'-cyclic AMP degradation; AMP from 3',5'-cyclic AMP: step 1/1. In terms of biological role, plays a role in signal transduction by regulating the intracellular concentration of cyclic nucleotides cAMP and cGMP. Catalyzes the hydrolysis of both cAMP and cGMP to 5'-AMP and 5'-GMP, respectively. By regulating cAMP levels during the asexual blood stage and, thus PKA activation, required for merozoite invasion of erythrocytes and for the parasite development immediately following invasion. This chain is Dual 3',5'-cyclic-AMP and -GMP phosphodiesterase beta, found in Plasmodium falciparum (isolate 3D7).